The sequence spans 126 residues: Aspartate 1-decarboxylase (126 aa).

S25 (schiff-base intermediate with substrate; via pyruvic acid) is an active-site residue. S25 bears the Pyruvic acid (Ser) mark. T57 contacts substrate. Y58 functions as the Proton donor in the catalytic mechanism. 73-75 (GAA) is a binding site for substrate.

This sequence belongs to the PanD family. As to quaternary structure, heterooctamer of four alpha and four beta subunits. Requires pyruvate as cofactor. In terms of processing, is synthesized initially as an inactive proenzyme, which is activated by self-cleavage at a specific serine bond to produce a beta-subunit with a hydroxyl group at its C-terminus and an alpha-subunit with a pyruvoyl group at its N-terminus.

It localises to the cytoplasm. It catalyses the reaction L-aspartate + H(+) = beta-alanine + CO2. It functions in the pathway cofactor biosynthesis; (R)-pantothenate biosynthesis; beta-alanine from L-aspartate: step 1/1. Functionally, catalyzes the pyruvoyl-dependent decarboxylation of aspartate to produce beta-alanine. The chain is Aspartate 1-decarboxylase from Cellvibrio japonicus (strain Ueda107) (Pseudomonas fluorescens subsp. cellulosa).